Consider the following 680-residue polypeptide: DNA-directed RNA polymerase subunit beta' (680 aa).

Zn(2+)-binding residues include cysteine 69, cysteine 71, cysteine 87, and cysteine 90. Mg(2+) is bound by residues aspartate 489, aspartate 491, and aspartate 493.

This sequence belongs to the RNA polymerase beta' chain family. RpoC1 subfamily. In terms of assembly, in plastids the minimal PEP RNA polymerase catalytic core is composed of four subunits: alpha, beta, beta', and beta''. When a (nuclear-encoded) sigma factor is associated with the core the holoenzyme is formed, which can initiate transcription. Mg(2+) serves as cofactor. It depends on Zn(2+) as a cofactor.

Its subcellular location is the plastid. The protein localises to the chloroplast. The enzyme catalyses RNA(n) + a ribonucleoside 5'-triphosphate = RNA(n+1) + diphosphate. DNA-dependent RNA polymerase catalyzes the transcription of DNA into RNA using the four ribonucleoside triphosphates as substrates. The chain is DNA-directed RNA polymerase subunit beta' from Carica papaya (Papaya).